Consider the following 599-residue polypeptide: Dual specificity tyrosine-phosphorylation-regulated kinase 2 (599 aa).

Residues 1–55 (MLTRKPSAAAPAAYPTGRGGDTAVRQLQASPGIGAGAPRSGVGTGPPSPIALPPL) are disordered. Ser-30 is subject to Phosphoserine. At Thr-104 the chain carries Phosphothreonine; by ATM. The short motif at 187–189 (KKR) is the Nuclear localization signal element. The Protein kinase domain maps to 220–533 (YEVLKVIGKG…PGQALRHPWL (314 aa)). Residues 226 to 234 (IGKGSFGQV), Lys-249, and 299 to 302 (FELL) contribute to the ATP site. The active-site Proton acceptor is the Asp-346. Thr-379 is modified (phosphothreonine; by MAP3K10). Tyr-380 is modified (phosphotyrosine; by autocatalysis). Ser-440 bears the Phosphoserine; by ATM mark. Ser-447 bears the Phosphoserine; by MAP3K10 mark.

It belongs to the protein kinase superfamily. CMGC Ser/Thr protein kinase family. MNB/DYRK subfamily. In terms of assembly, component of an E3 ligase complex containing DYRK2, EDD/UBR5, DDB1 and DCAF1 (EDVP complex). Interacts directly with EDD/UBR5, DDB1 and DCAF1. Interacts with SIAH2 and MDM2. Interacts with MAP3K10 and NFATC1. May also interact with CCNL2. It depends on Mg(2+) as a cofactor. Requires Mn(2+) as cofactor. In terms of processing, autophosphorylates cotranslationally on the second tyrosine residue in the Tyr-X-Tyr motif in the activation loop, but once mature, does not have any protein tyrosine kinase activity. Phosphorylated at Thr-104 and Ser-440 by ATM in response to genotoxic stress. Under normal conditions, polyubiquitinated in the nucleus by MDM2, leading to its proteasomal degradation. Phosphorylation on Thr-104 and Ser-440 by ATM in response to genotoxic stress disrupts MDM2 binding and prevents MDM2-mediated ubiquitination and subsequent proteasomal degradation. Polyubiquitinated by SIAH2, leading to its proteasomal degradation. Polyubiquitinated by SIAH2 occurs under normal conditions, and is enhanced in response to hypoxia.

Its subcellular location is the cytoplasm. It localises to the nucleus. It carries out the reaction L-seryl-[protein] + ATP = O-phospho-L-seryl-[protein] + ADP + H(+). It catalyses the reaction L-threonyl-[protein] + ATP = O-phospho-L-threonyl-[protein] + ADP + H(+). The catalysed reaction is L-tyrosyl-[protein] + ATP = O-phospho-L-tyrosyl-[protein] + ADP + H(+). With respect to regulation, activated by autophosphorylation on the second tyrosine residue in the Tyr-X-Tyr motif in the activation loop. Serine/threonine-protein kinase involved in the regulation of the mitotic cell cycle, cell proliferation, apoptosis, organization of the cytoskeleton and neurite outgrowth. Functions in part via its role in ubiquitin-dependent proteasomal protein degradation. Functions downstream of ATM and phosphorylates p53/TP53 at 'Ser-46', and thereby contributes to the induction of apoptosis in response to DNA damage. Phosphorylates NFATC1, and thereby inhibits its accumulation in the nucleus and its transcription factor activity. Phosphorylates EIF2B5 at 'Ser-544', enabling its subsequent phosphorylation and inhibition by GSK3B. Likewise, phosphorylation of NFATC1, CRMP2/DPYSL2 and CRMP4/DPYSL3 promotes their subsequent phosphorylation by GSK3B. May play a general role in the priming of GSK3 substrates. Inactivates GYS1 by phosphorylation at 'Ser-641', and potentially also a second phosphorylation site, thus regulating glycogen synthesis. Mediates EDVP E3 ligase complex formation and is required for the phosphorylation and subsequent degradation of KATNA1. Phosphorylates TERT at 'Ser-457', promoting TERT ubiquitination by the EDVP complex. Phosphorylates SIAH2, and thereby increases its ubiquitin ligase activity. Promotes the proteasomal degradation of MYC and JUN, and thereby regulates progress through the mitotic cell cycle and cell proliferation. Promotes proteasomal degradation of GLI2 and GLI3, and thereby plays a role in smoothened and sonic hedgehog signaling. Phosphorylates CRMP2/DPYSL2, CRMP4/DPYSL3, DCX, EIF2B5, EIF4EBP1, GLI2, GLI3, GYS1, JUN, MDM2, MYC, NFATC1, p53/TP53, TAU/MAPT and KATNA1. Can phosphorylate histone H1, histone H3 and histone H2B (in vitro). Can phosphorylate CARHSP1 (in vitro). Plays a role in cytoskeleton organization and neurite outgrowth via its phosphorylation of DCX. This Mus musculus (Mouse) protein is Dual specificity tyrosine-phosphorylation-regulated kinase 2.